The primary structure comprises 613 residues: Pescadillo homolog (613 aa).

Residues 259–344 (KELSNELETK…MKQIEHDIIX (86 aa)) are a coiled coil. A disordered region spans residues 268–333 (KESTEDNIIE…KNDQKNDQKN (66 aa)). Residues 278–333 (ENEKKTKNGKTENCEKNDQENEKKTKNDKTKNCEKNDQKNDQKNDQKNDQKNDQKN) are compositionally biased toward basic and acidic residues. In terms of domain architecture, BRCT spans 350–453 (SVKNLFKNHI…MILSCEDYNI (104 aa)). Positions 485 to 517 (LSEDPQYNKSIQKNKTNSENKXNNYNDNENDMS) are disordered. The stretch at 492–601 (NKSIQKNKTN…ENRQKLTIEK (110 aa)) forms a coiled coil. Residues 497–511 (KNKTNSENKXNNYND) are compositionally biased toward low complexity.

It belongs to the pescadillo family.

The protein localises to the nucleus. Its subcellular location is the nucleolus. The protein resides in the nucleoplasm. Functionally, required for maturation of ribosomal RNAs and formation of the large ribosomal subunit. The polypeptide is Pescadillo homolog (Plasmodium yoelii yoelii).